The sequence spans 396 residues: Pyridinium-3,5-bisthiocarboxylic acid mononucleotide nickel insertion protein (396 aa).

It belongs to the LarC family.

The enzyme catalyses Ni(II)-pyridinium-3,5-bisthiocarboxylate mononucleotide = pyridinium-3,5-bisthiocarboxylate mononucleotide + Ni(2+). Involved in the biosynthesis of a nickel-pincer cofactor ((SCS)Ni(II) pincer complex). Binds Ni(2+), and functions in nickel delivery to pyridinium-3,5-bisthiocarboxylic acid mononucleotide (P2TMN), to form the mature cofactor. Is thus probably required for the activation of nickel-pincer cofactor-dependent enzymes. The protein is Pyridinium-3,5-bisthiocarboxylic acid mononucleotide nickel insertion protein of Moorella thermoacetica (strain ATCC 39073 / JCM 9320).